We begin with the raw amino-acid sequence, 118 residues long: Ribonuclease P protein component (118 aa).

It belongs to the RnpA family. In terms of assembly, consists of a catalytic RNA component (M1 or rnpB) and a protein subunit.

The enzyme catalyses Endonucleolytic cleavage of RNA, removing 5'-extranucleotides from tRNA precursor.. In terms of biological role, RNaseP catalyzes the removal of the 5'-leader sequence from pre-tRNA to produce the mature 5'-terminus. It can also cleave other RNA substrates such as 4.5S RNA. The protein component plays an auxiliary but essential role in vivo by binding to the 5'-leader sequence and broadening the substrate specificity of the ribozyme. This chain is Ribonuclease P protein component, found in Rickettsia felis (strain ATCC VR-1525 / URRWXCal2) (Rickettsia azadi).